An 871-amino-acid polypeptide reads, in one-letter code: Leucine--tRNA ligase (871 aa).

A 'HIGH' region motif is present at residues 43 to 53; sequence PYPSGRIHIGH. Residues 629–633 carry the 'KMSKS' region motif; it reads KMSKS. K632 contacts ATP.

Belongs to the class-I aminoacyl-tRNA synthetase family.

The protein localises to the cytoplasm. The catalysed reaction is tRNA(Leu) + L-leucine + ATP = L-leucyl-tRNA(Leu) + AMP + diphosphate. This Chelativorans sp. (strain BNC1) protein is Leucine--tRNA ligase.